A 250-amino-acid polypeptide reads, in one-letter code: uncharacterized protein (250 aa).

In terms of domain architecture, ABC transporter spans L7 to K244. G39–S46 serves as a coordination point for ATP.

It belongs to the ABC transporter superfamily.

This is an uncharacterized protein from Methanocaldococcus jannaschii (strain ATCC 43067 / DSM 2661 / JAL-1 / JCM 10045 / NBRC 100440) (Methanococcus jannaschii).